The following is a 306-amino-acid chain: Ciliary microtubule inner protein 2B (306 aa).

Residues 61–92 are disordered; sequence QSNPFPPPRDHSFDGGSQELGGRRQHPGDPNL.

Belongs to the CIMIP2 family. In terms of tissue distribution, expressed in airway epithelial cells.

Its subcellular location is the cytoplasm. The protein resides in the cytoskeleton. The protein localises to the cilium axoneme. Microtubule inner protein (MIP) part of the dynein-decorated doublet microtubules (DMTs) in cilia axoneme, which is required for motile cilia beating. This is Ciliary microtubule inner protein 2B (cimip2b) from Xenopus tropicalis (Western clawed frog).